Reading from the N-terminus, the 414-residue chain is DNA primase small subunit PriS (414 aa).

Active-site residues include Asp-98, Asp-100, and Asp-312.

Belongs to the eukaryotic-type primase small subunit family. As to quaternary structure, heterodimer of a small subunit (PriS) and a large subunit (PriL). The cofactor is Mg(2+). Mn(2+) is required as a cofactor.

Functionally, catalytic subunit of DNA primase, an RNA polymerase that catalyzes the synthesis of short RNA molecules used as primers for DNA polymerase during DNA replication. The small subunit contains the primase catalytic core and has DNA synthesis activity on its own. Binding to the large subunit stabilizes and modulates the activity, increasing the rate of DNA synthesis while decreasing the length of the DNA fragments, and conferring RNA synthesis capability. The DNA polymerase activity may enable DNA primase to also catalyze primer extension after primer synthesis. May also play a role in DNA repair. This is DNA primase small subunit PriS from Methanosarcina barkeri (strain Fusaro / DSM 804).